The chain runs to 536 residues: Prickle planar cell polarity protein 3-B (536 aa).

Residues 66–175 (SGSQRDSLCD…CVRPISGTMS (110 aa)) enclose the PET domain. LIM zinc-binding domains follow at residues 177–241 (TVCQ…ELKR), 242–302 (PRCL…LYAQ), and 305–366 (DSCG…HTKS). The tract at residues 418–536 (PTQAAPARSL…KKKDKSCFLS (119 aa)) is disordered. Basic and acidic residues predominate over residues 438–448 (FSRECPNRRSL). The segment covering 450–467 (DLSSHTRTPTRVTFQLPS) has biased composition (polar residues). Over residues 474–487 (SISFSRPSFTSSSS) the composition is skewed to low complexity.

This sequence belongs to the prickle / espinas / testin family. As to quaternary structure, interacts with vangl2 via its C-terminus. The vangl2-dependent membrane recruitment of prickle3 is a prerequisite for its polarization. Interacts with wtip. Wtip is involved in the recruitment of prickle3 to the basal body.

The protein resides in the cytoplasm. Its subcellular location is the cell membrane. It localises to the mitochondrion. Its function is as follows. Involved in the planar cell polarity (PCP) pathway that is essential for the polarization of epithelial cells during morphogenetic processes, including gastrulation and neurulation. PCP is maintained by two molecular modules, the global and the core modules. Proteins of the core module include the proteins Frizzled (Fz), Disheveled (Dsh), Van Gogh (Vang), Prickle (Pk), Flamingo (Fmi, Celsr) and Diego (Dgo). The core module proteins develop subcellular asymmetry, accumulating in two groups on opposite sides of epithelial cells. Distinct proximal (Vang, Pk and Fmi) and distal (Fz, Dsh, Dgo and Fmi) complexes segregate to opposite sides of the cell, where they interact with the opposite complex in the neighboring cell at or near the adherents junctions. Directional information to orient polarization with respect to the tissue axes is provided by the global module which involves Wnt proteins. Involved in the organization of the basal body. Involved in cilia growth and positioning. Required for proper assembly, stability, and function of mitochondrial membrane ATP synthase (mitochondrial complex V). The polypeptide is Prickle planar cell polarity protein 3-B (prickle3-b) (Xenopus laevis (African clawed frog)).